A 463-amino-acid chain; its full sequence is Asparagine--tRNA ligase (463 aa).

It belongs to the class-II aminoacyl-tRNA synthetase family. As to quaternary structure, homodimer.

Its subcellular location is the cytoplasm. The catalysed reaction is tRNA(Asn) + L-asparagine + ATP = L-asparaginyl-tRNA(Asn) + AMP + diphosphate + H(+). The protein is Asparagine--tRNA ligase of Clostridium novyi (strain NT).